The sequence spans 92 residues: Small ribosomal subunit protein uS19 (92 aa).

Belongs to the universal ribosomal protein uS19 family.

In terms of biological role, protein S19 forms a complex with S13 that binds strongly to the 16S ribosomal RNA. The polypeptide is Small ribosomal subunit protein uS19 (Borreliella afzelii (strain PKo) (Borrelia afzelii)).